The chain runs to 1544 residues: Telomerase-binding protein EST1A (1544 aa).

Basic and acidic residues-rich tracts occupy residues 25-48, 108-141, and 177-209; these read HGDD…KRPD, LNDH…KIIE, and GASK…EEKR. Disordered regions lie at residues 25–503, 536–573, 936–964, and 976–996; these read HGDD…RGRG, RGRG…SQHQ, QVER…GEDA, and VSGT…QDGE. Residues 223-244 are compositionally biased toward polar residues; that stretch reads SVETPSANKTENAVENISNKVS. Composition is skewed to basic and acidic residues over residues 249 to 273, 283 to 330, and 338 to 369; these read ETVE…EGRK, MGED…EGRK, and EASR…DSKR. A compositionally biased stretch (low complexity) spans 389–400; sequence TYSTSSASSGTS. 2 stretches are compositionally biased toward basic and acidic residues: residues 421 to 432 and 458 to 495; these read TLERATGQREFV and VWER…EQAS. Residues 536 to 545 show a composition bias toward gly residues; it reads RGRGGRGGGT. Positions 547–558 are enriched in basic and acidic residues; the sequence is RLWDPNNPDKKP. Low complexity predominate over residues 562-573; that stretch reads SSQQSQHASQHQ. The segment covering 936-947 has biased composition (basic and acidic residues); that stretch reads QVERRLKQDSDG. The segment covering 976–986 has biased composition (polar residues); it reads VSGTSRPTGSE. The region spanning 1369-1522 is the PINc domain; sequence FYLVPDTNGF…LLTDDRNLRV (154 aa).

May form homooligomers. Associated component of the telomerase holoenzyme complex. The cofactor is Mn(2+).

It localises to the nucleus. Its subcellular location is the nucleolus. It is found in the chromosome. The protein localises to the telomere. The protein resides in the cytoplasm. It localises to the cytosol. Functionally, component of the telomerase ribonucleoprotein (RNP) complex that is essential for the replication of chromosome termini. Required for normal embryonic development. In terms of biological role, plays a role in nonsense-mediated mRNA decay. This is Telomerase-binding protein EST1A (smg6) from Danio rerio (Zebrafish).